Consider the following 201-residue polypeptide: Bradykinin potentiating and C-type natriuretic peptides (201 aa).

An N-terminal signal peptide occupies residues 1–23 (MFVSRLAASGLLLLALLAVSLDG). Positions 24-47 (KPVQQWSQNWPGPKVPPLVVQQWS) are excised as a propeptide. Glutamine 48 carries the pyrrolidone carboxylic acid modification. The propeptide occupies 58 to 60 (LVV). Pyrrolidone carboxylic acid is present on glutamine 61. 2 propeptides span residues 67-95 (TQLQPRESPAGGTTALREELSLGPDAALD) and 107-179 (GSKA…LAKK). The segment at 90–172 (PDAALDTPPA…GGGGGGGARR (83 aa)) is disordered. The segment covering 120–130 (SKGASATSTAS) has biased composition (low complexity). Positions 132–142 (PMRDLRTDGKQ) are enriched in basic and acidic residues. Over residues 159–170 (PGGGGGGGGGGA) the composition is skewed to gly residues. Cysteine 185 and cysteine 201 are joined by a disulfide.

In the N-terminal section; belongs to the bradykinin-potentiating peptide family. It in the central section; belongs to the bradykinin inhibitor peptide family. The protein in the C-terminal section; belongs to the natriuretic peptide family. In terms of tissue distribution, venom gland.

The protein localises to the secreted. Its function is as follows. Inhibits the activity of the angiotensin-converting enzyme (ACE) by a preferential interaction with its C-domain. May also potentiate the hypotensive effects of bradykinin. In terms of biological role, antagonizes the vasodilatory actions of bradykinin at the B2 bradykinin receptor. Functionally, has a vasorelaxant activity in rat aortic strips and a diuretic potency in anesthetized rats. May act by activating natriuretic receptors (NPR1 and/or NPR2). The polypeptide is Bradykinin potentiating and C-type natriuretic peptides (Sistrurus catenatus edwardsii (Desert massasauga)).